Reading from the N-terminus, the 311-residue chain is Homeobox protein knotted-1-like 10 (311 aa).

Disordered regions lie at residues 1-45 (MEDL…PATT) and 153-184 (LCGG…DAAD). The segment covering 12 to 22 (SRGGGGGGGGA) has biased composition (gly residues). The ELK domain occupies 197–217 (ELKEMLLKKYSGCLSRLRSEF). Positions 218–281 (LKKRKKGKLP…NQRKRHWKPS (64 aa)) form a DNA-binding region, homeobox; TALE-type.

It belongs to the TALE/KNOX homeobox family.

The protein resides in the nucleus. Its function is as follows. Probable transcription factor that may be involved in shoot formation during embryogenesis. The polypeptide is Homeobox protein knotted-1-like 10 (OSH71) (Oryza sativa subsp. indica (Rice)).